Here is a 208-residue protein sequence, read N- to C-terminus: Apoptosis inhibitor 193R (208 aa).

The interval 1–25 is disordered; that stretch reads MDTCGIYNSDNEEFSQENDGENDGG. Residues 10-23 are compositionally biased toward acidic residues; it reads DNEEFSQENDGEND. One copy of the BIR repeat lies at 37–108; that stretch reads YDERLNSFQN…QDLKINCLFV (72 aa). C74, C77, H94, and C105 together coordinate Zn(2+). A run of 3 repeats spans residues 134–139, 140–145, and 146–151. The tract at residues 134 to 151 is 3 X 6 AA tandem repeats; that stretch reads NQDLDHNQDLDHNQDLDQ. The RING-type zinc-finger motif lies at 163 to 197; the sequence is CKICFTNKITKVLIPCGHSSCYECVFKLQTCPICK.

It belongs to the IIV-6 193R family.

Plays a role early in infection by preventing host cell apoptosis. In Invertebrate iridescent virus 6 (IIV-6), this protein is Apoptosis inhibitor 193R.